The following is a 388-amino-acid chain: Succinate--CoA ligase [ADP-forming] subunit beta (388 aa).

In terms of domain architecture, ATP-grasp spans 9-244; that stretch reads KQIFAEYQLP…PSQEDPREAL (236 aa). ATP is bound by residues Lys-46, 53–55, Glu-99, Ser-102, and Glu-107; that span reads GRG. 2 residues coordinate Mg(2+): Asn-199 and Asp-213. Substrate is bound by residues Asn-264 and 321-323; that span reads GIV.

This sequence belongs to the succinate/malate CoA ligase beta subunit family. As to quaternary structure, heterotetramer of two alpha and two beta subunits. Mg(2+) serves as cofactor.

It carries out the reaction succinate + ATP + CoA = succinyl-CoA + ADP + phosphate. It catalyses the reaction GTP + succinate + CoA = succinyl-CoA + GDP + phosphate. Its pathway is carbohydrate metabolism; tricarboxylic acid cycle; succinate from succinyl-CoA (ligase route): step 1/1. Functionally, succinyl-CoA synthetase functions in the citric acid cycle (TCA), coupling the hydrolysis of succinyl-CoA to the synthesis of either ATP or GTP and thus represents the only step of substrate-level phosphorylation in the TCA. The beta subunit provides nucleotide specificity of the enzyme and binds the substrate succinate, while the binding sites for coenzyme A and phosphate are found in the alpha subunit. This Pasteurella multocida (strain Pm70) protein is Succinate--CoA ligase [ADP-forming] subunit beta.